The chain runs to 380 residues: Cytochrome b (380 aa).

4 consecutive transmembrane segments (helical) span residues 34-54 (FGSLLGTCLATQIITGLLLAM), 78-99 (WLIRNLHANGASFFFICIYLHI), 114-134 (WNTGVVLLLTLMATAFVGYVL), and 179-199 (FFALHFLLPFLIAGLTLIHLT). The heme b site is built by histidine 84 and histidine 98. Positions 183 and 197 each coordinate heme b. Histidine 202 lines the a ubiquinone pocket. A run of 4 helical transmembrane segments spans residues 227–247 (TKDLLGFIIMLTPLMTLALFS), 289–309 (LGGVLALTASVLVLFLSPFLH), 321–341 (LSQILFWTLVANLLILTWVGS), and 348–368 (FIIIGQLASLTYFTILLILFP).

It belongs to the cytochrome b family. As to quaternary structure, the cytochrome bc1 complex contains 11 subunits: 3 respiratory subunits (MT-CYB, CYC1 and UQCRFS1), 2 core proteins (UQCRC1 and UQCRC2) and 6 low-molecular weight proteins (UQCRH/QCR6, UQCRB/QCR7, UQCRQ/QCR8, UQCR10/QCR9, UQCR11/QCR10 and a cleavage product of UQCRFS1). This cytochrome bc1 complex then forms a dimer. Requires heme b as cofactor.

It localises to the mitochondrion inner membrane. Its function is as follows. Component of the ubiquinol-cytochrome c reductase complex (complex III or cytochrome b-c1 complex) that is part of the mitochondrial respiratory chain. The b-c1 complex mediates electron transfer from ubiquinol to cytochrome c. Contributes to the generation of a proton gradient across the mitochondrial membrane that is then used for ATP synthesis. The chain is Cytochrome b (MT-CYB) from Aerodramus vulcanorum (Volcano swiftlet).